The following is a 200-amino-acid chain: ATP-dependent Clp protease proteolytic subunit (200 aa).

Ser97 serves as the catalytic Nucleophile. His122 is a catalytic residue.

It belongs to the peptidase S14 family. As to quaternary structure, fourteen ClpP subunits assemble into 2 heptameric rings which stack back to back to give a disk-like structure with a central cavity, resembling the structure of eukaryotic proteasomes.

It is found in the cytoplasm. The catalysed reaction is Hydrolysis of proteins to small peptides in the presence of ATP and magnesium. alpha-casein is the usual test substrate. In the absence of ATP, only oligopeptides shorter than five residues are hydrolyzed (such as succinyl-Leu-Tyr-|-NHMec, and Leu-Tyr-Leu-|-Tyr-Trp, in which cleavage of the -Tyr-|-Leu- and -Tyr-|-Trp bonds also occurs).. Functionally, cleaves peptides in various proteins in a process that requires ATP hydrolysis. Has a chymotrypsin-like activity. Plays a major role in the degradation of misfolded proteins. The protein is ATP-dependent Clp protease proteolytic subunit of Oleidesulfovibrio alaskensis (strain ATCC BAA-1058 / DSM 17464 / G20) (Desulfovibrio alaskensis).